The sequence spans 119 residues: Large ribosomal subunit protein bL20 (119 aa).

It belongs to the bacterial ribosomal protein bL20 family.

Functionally, binds directly to 23S ribosomal RNA and is necessary for the in vitro assembly process of the 50S ribosomal subunit. It is not involved in the protein synthesizing functions of that subunit. This Dechloromonas aromatica (strain RCB) protein is Large ribosomal subunit protein bL20.